We begin with the raw amino-acid sequence, 342 residues long: Nicotinate-nucleotide--dimethylbenzimidazole phosphoribosyltransferase (342 aa).

Glutamate 311 serves as the catalytic Proton acceptor.

The protein belongs to the CobT family.

It carries out the reaction 5,6-dimethylbenzimidazole + nicotinate beta-D-ribonucleotide = alpha-ribazole 5'-phosphate + nicotinate + H(+). The protein operates within nucleoside biosynthesis; alpha-ribazole biosynthesis; alpha-ribazole from 5,6-dimethylbenzimidazole: step 1/2. In terms of biological role, catalyzes the synthesis of alpha-ribazole-5'-phosphate from nicotinate mononucleotide (NAMN) and 5,6-dimethylbenzimidazole (DMB). This chain is Nicotinate-nucleotide--dimethylbenzimidazole phosphoribosyltransferase, found in Shewanella piezotolerans (strain WP3 / JCM 13877).